A 386-amino-acid chain; its full sequence is Ribosomal RNA small subunit methyltransferase H (386 aa).

S-adenosyl-L-methionine is bound by residues 97–99, aspartate 116, tyrosine 143, aspartate 167, and glutamine 174; that span reads GGH.

Belongs to the methyltransferase superfamily. RsmH family.

It localises to the cytoplasm. It carries out the reaction cytidine(1402) in 16S rRNA + S-adenosyl-L-methionine = N(4)-methylcytidine(1402) in 16S rRNA + S-adenosyl-L-homocysteine + H(+). Its function is as follows. Specifically methylates the N4 position of cytidine in position 1402 (C1402) of 16S rRNA. The sequence is that of Ribosomal RNA small subunit methyltransferase H from Mycolicibacterium paratuberculosis (strain ATCC BAA-968 / K-10) (Mycobacterium paratuberculosis).